The primary structure comprises 455 residues: Argininosuccinate lyase (455 aa).

The protein belongs to the lyase 1 family. Argininosuccinate lyase subfamily.

The protein resides in the cytoplasm. It carries out the reaction 2-(N(omega)-L-arginino)succinate = fumarate + L-arginine. It participates in amino-acid biosynthesis; L-arginine biosynthesis; L-arginine from L-ornithine and carbamoyl phosphate: step 3/3. This chain is Argininosuccinate lyase, found in Shewanella denitrificans (strain OS217 / ATCC BAA-1090 / DSM 15013).